Reading from the N-terminus, the 207-residue chain is Succinyl-CoA:3-ketoacid coenzyme A transferase subunit B (207 aa).

Glutamate 43 is a catalytic residue.

The protein belongs to the 3-oxoacid CoA-transferase subunit B family. As to quaternary structure, heterodimer of a subunit A and a subunit B.

It carries out the reaction a 3-oxo acid + succinyl-CoA = a 3-oxoacyl-CoA + succinate. In Helicobacter pylori (strain ATCC 700392 / 26695) (Campylobacter pylori), this protein is Succinyl-CoA:3-ketoacid coenzyme A transferase subunit B (scoB).